Reading from the N-terminus, the 433-residue chain is GTPase Obg (433 aa).

In terms of domain architecture, Obg spans 1 to 159 (MKFVDSADLI…FEIRAELKVL (159 aa)). The 173-residue stretch at 160–332 (ADVGFVGLPN…LLFMIYEELK (173 aa)) folds into the OBG-type G domain. GTP-binding positions include 166-173 (GLPNAGKS), 191-195 (FTTIN), 213-216 (DLPG), 284-287 (NKMD), and 313-315 (SGL). 2 residues coordinate Mg(2+): serine 173 and threonine 193. The OCT domain maps to 355–433 (KFEEQKEDIQ…VFDYELEWTD (79 aa)).

It belongs to the TRAFAC class OBG-HflX-like GTPase superfamily. OBG GTPase family. Monomer. The cofactor is Mg(2+).

The protein resides in the cytoplasm. Functionally, an essential GTPase which binds GTP, GDP and possibly (p)ppGpp with moderate affinity, with high nucleotide exchange rates and a fairly low GTP hydrolysis rate. Plays a role in control of the cell cycle, stress response, ribosome biogenesis and in those bacteria that undergo differentiation, in morphogenesis control. The polypeptide is GTPase Obg (Mycoplasma capricolum subsp. capricolum (strain California kid / ATCC 27343 / NCTC 10154)).